The chain runs to 251 residues: Malonyl-[acyl-carrier protein] O-methyltransferase (251 aa).

The protein belongs to the methyltransferase superfamily.

It carries out the reaction malonyl-[ACP] + S-adenosyl-L-methionine = malonyl-[ACP] methyl ester + S-adenosyl-L-homocysteine. The protein operates within cofactor biosynthesis; biotin biosynthesis. Its function is as follows. Converts the free carboxyl group of a malonyl-thioester to its methyl ester by transfer of a methyl group from S-adenosyl-L-methionine (SAM). It allows to synthesize pimeloyl-ACP via the fatty acid synthetic pathway. This chain is Malonyl-[acyl-carrier protein] O-methyltransferase, found in Erwinia billingiae (strain Eb661).